Reading from the N-terminus, the 152-residue chain is Ribosome maturation factor RimP (152 aa).

Belongs to the RimP family.

The protein localises to the cytoplasm. Required for maturation of 30S ribosomal subunits. The protein is Ribosome maturation factor RimP of Desulfitobacterium hafniense (strain Y51).